The sequence spans 287 residues: MTNKLDGKALAKKIKAELQQKVQSLQIKIGRPPGLAVLMVGDNPASGVYVRNKEKACTQVGITSLGKHFPTQTSQAQLGQVIQKLNQDPQVDGILVQLPLPKHLDSTSLLYQIDPSKDVDGLHPMNLGQLLRGEKGLRSCTPAGVMRLLQEYKIELQGKHAVILGRSILVGKPMALMLLEANSTVTIAHSRSKNLEAITKKADILITAVGRPKMISAEMVKPGAVVIDVGINRVIDEAGNSQLVGDVQFNSVAQVAEYITPVPGGIGPMTVAMLLQNTVERWSTLVE.

NADP(+) is bound by residues 165 to 167, Ser-190, and Ile-231; that span reads GRS.

It belongs to the tetrahydrofolate dehydrogenase/cyclohydrolase family. Homodimer.

It catalyses the reaction (6R)-5,10-methylene-5,6,7,8-tetrahydrofolate + NADP(+) = (6R)-5,10-methenyltetrahydrofolate + NADPH. The catalysed reaction is (6R)-5,10-methenyltetrahydrofolate + H2O = (6R)-10-formyltetrahydrofolate + H(+). Its pathway is one-carbon metabolism; tetrahydrofolate interconversion. Catalyzes the oxidation of 5,10-methylenetetrahydrofolate to 5,10-methenyltetrahydrofolate and then the hydrolysis of 5,10-methenyltetrahydrofolate to 10-formyltetrahydrofolate. This chain is Bifunctional protein FolD, found in Trichodesmium erythraeum (strain IMS101).